The following is a 504-amino-acid chain: Multicopper oxidase MmcO (504 aa).

Positions 1–44 form a signal peptide, tat-type signal; that stretch reads MPELATSGNAFDKRRFSRRGFLGAGIASGFALAACASKPTASGA. Cu cation-binding residues include His120, His122, His161, and His163. Positions 190 to 349 constitute a Plastocyanin-like domain; sequence EWIIILDDWT…NALARALLST (160 aa). His437, His440, His442, His485, Cys486, His487, and His491 together coordinate Cu cation.

It belongs to the multicopper oxidase family. Cu cation is required as a cofactor. In terms of processing, predicted to be exported by the Tat system. The position of the signal peptide cleavage has not been experimentally proven.

Its subcellular location is the cell inner membrane. It localises to the periplasm. It carries out the reaction 4 Fe(2+) + O2 + 4 H(+) = 4 Fe(3+) + 2 H2O. In terms of biological role, required for copper resistance. In vitro, oxidizes organic substrates and Fe(2+). May act in vivo by oxidation of toxic periplasmic Cu(+). In Mycobacterium tuberculosis (strain ATCC 25618 / H37Rv), this protein is Multicopper oxidase MmcO.